Reading from the N-terminus, the 1006-residue chain is Unconventional myosin-Id (1006 aa).

Alanine 2 carries the N-acetylalanine modification. The Myosin motor domain occupies 9 to 695 (FGKADFVLMD…TLFTLEELRA (687 aa)). 102–109 (GESGAGKT) lines the ATP pocket. Residue serine 200 is modified to Phosphoserine. At tyrosine 536 the chain carries Phosphotyrosine. The tract at residues 572 to 594 (MIALVDNLASKEPYYVRCIKPND) is actin-binding. IQ domains follow at residues 699-719 (VRIV…MRYK) and 721-741 (TKAA…SYIH). Positions 812–1005 (GQRADLGLQR…RSGFILSVPG (194 aa)) constitute a TH1 domain.

Belongs to the TRAFAC class myosin-kinesin ATPase superfamily. Myosin family. As to quaternary structure, interacts (via the two IQ motifs) with calmodulin. Binds an additional calmodulin chain via a third, C-terminal region. Interacts with F-actin.

It is found in the cytoplasm. Its subcellular location is the perikaryon. The protein localises to the cell projection. It localises to the dendrite. The protein resides in the early endosome. It is found in the cell cortex. In terms of biological role, unconventional myosin that functions as actin-based motor protein with ATPase activity. Plays a role in endosomal protein trafficking, and especially in the transfer of cargo proteins from early to recycling endosomes. Required for normal planar cell polarity in ciliated tracheal cells, for normal rotational polarity of cilia, and for coordinated, unidirectional ciliary movement in the trachea. Required for normal, polarized cilia organization in brain ependymal epithelial cells. This chain is Unconventional myosin-Id (MYO1D), found in Bos taurus (Bovine).